A 335-amino-acid polypeptide reads, in one-letter code: Fructokinase-2 (335 aa).

The protein belongs to the carbohydrate kinase PfkB family. As to expression, expressed in roots, at higher levels in stems, and hardly detectable in leaves.

It catalyses the reaction D-fructose + ATP = D-fructose 6-phosphate + ADP + H(+). It participates in glycan biosynthesis; starch biosynthesis. Inhibited at high fructose. May play an important role in maintaining the flux of carbon towards starch formation. May also be involved in a sugar-sensing pathway. The chain is Fructokinase-2 (FRK2) from Zea mays (Maize).